The chain runs to 69 residues: MSVLTSLLLRGLTGSARRLPVPRAKVHSMPPEEELGTLEKAIALTSCFVSLFLPAGWILSHLEDYKRPE.

The N-terminal 25 residues, 1 to 25, are a transit peptide targeting the mitochondrion; that stretch reads MSVLTSLLLRGLTGSARRLPVPRAK. The SIFI-degron signature appears at 2 to 19; that stretch reads SVLTSLLLRGLTGSARRL. At 26–36 the chain is on the mitochondrial matrix side; that stretch reads VHSMPPEEELG. A helical membrane pass occupies residues 37–60; it reads TLEKAIALTSCFVSLFLPAGWILS. Topologically, residues 61–69 are mitochondrial intermembrane; the sequence is HLEDYKRPE.

Belongs to the cytochrome c oxidase VIII family. Component of the cytochrome c oxidase (complex IV, CIV), a multisubunit enzyme composed of 14 subunits. The complex is composed of a catalytic core of 3 subunits MT-CO1, MT-CO2 and MT-CO3, encoded in the mitochondrial DNA, and 11 supernumerary subunits COX4I, COX5A, COX5B, COX6A, COX6B, COX6C, COX7A, COX7B, COX7C, COX8 and NDUFA4, which are encoded in the nuclear genome. The complex exists as a monomer or a dimer and forms supercomplexes (SCs) in the inner mitochondrial membrane with NADH-ubiquinone oxidoreductase (complex I, CI) and ubiquinol-cytochrome c oxidoreductase (cytochrome b-c1 complex, complex III, CIII), resulting in different assemblies (supercomplex SCI(1)III(2)IV(1) and megacomplex MCI(2)III(2)IV(2)). In terms of processing, in response to mitochondrial stress, the precursor protein is ubiquitinated by the SIFI complex in the cytoplasm before mitochondrial import, leading to its degradation. Within the SIFI complex, UBR4 initiates ubiquitin chain that are further elongated or branched by KCMF1.

The protein resides in the mitochondrion inner membrane. The protein operates within energy metabolism; oxidative phosphorylation. Functionally, component of the cytochrome c oxidase, the last enzyme in the mitochondrial electron transport chain which drives oxidative phosphorylation. The respiratory chain contains 3 multisubunit complexes succinate dehydrogenase (complex II, CII), ubiquinol-cytochrome c oxidoreductase (cytochrome b-c1 complex, complex III, CIII) and cytochrome c oxidase (complex IV, CIV), that cooperate to transfer electrons derived from NADH and succinate to molecular oxygen, creating an electrochemical gradient over the inner membrane that drives transmembrane transport and the ATP synthase. Cytochrome c oxidase is the component of the respiratory chain that catalyzes the reduction of oxygen to water. Electrons originating from reduced cytochrome c in the intermembrane space (IMS) are transferred via the dinuclear copper A center (CU(A)) of subunit 2 and heme A of subunit 1 to the active site in subunit 1, a binuclear center (BNC) formed by heme A3 and copper B (CU(B)). The BNC reduces molecular oxygen to 2 water molecules using 4 electrons from cytochrome c in the IMS and 4 protons from the mitochondrial matrix. The polypeptide is Cytochrome c oxidase subunit 8A, mitochondrial (COX8A) (Papio anubis (Olive baboon)).